Consider the following 141-residue polypeptide: uncharacterized protein (141 aa).

This is an uncharacterized protein from Escherichia coli (strain K12).